A 1172-amino-acid polypeptide reads, in one-letter code: MENIAHHNTTYNITPICSDSSECSSMEMLPLGCKTHSDKSDARRNLMDTGIYTPDSNSDSSDPRSDSSCVDVSNSLAVSHPISFCNWTDEESSLLTEHIKTDLTSEALTSAFPNKSLALIIRKIHDLQPVLDWTKNEIYLLAGIILNDSNSAIRRHKHKFPCRNVSNLNKKFQHYKNMVRRLNGVDHSKWTKPEIASLISLIDYDLTKTKLQKELPNKNIEEIKDLTNEMRIHSNFSHVESVLFEQTMTENDPIEIVLDQFPLKNKETCKKRLLKLNELSQHRDMAKRRLDEFESLIQNELKQIKDSIDLTRLKYLLVNDLTGKQLRSSFPGISMKYLKLIAKEMGFDEAGEYTLAEMNFLKKALQENAKLKSIIDELPFRSQLSIETKINSVEPNRRRSVFTSQVDELLYMAKWYSSDNFGNLSRRRNSRYASKLDKPKDKASDIMQPSKLHLENEEVTEAKVIPHDKGVENMISDHKLKGKNNEQKKRKSKKPTSMVEVLKEESAYFQSVTGNRCVLKEGQKRKRERLMQIKLETKLKKPKSQNLNETNRIQETKKLMKCDVEPDKVKEQKSFKSENLKEAKLDASDSSIVSDVEISLKKKLNKIENEEKRSPYDPEDISTDTLVPLYGRQLYVNEVYETQPRPPKLSFREDTNIMVQNCSEISLTDTIAADIISQHCKNYRDMPISFPSLTIVDRNTNRMILNPMNKIRIRFLLYPQHSELFILAEPKSNELDPINEIKKLFQLHYSLFFSHSSKLKKIILSEYNKEIDISIEENDFVRFMFVIDKWNRLMVELTPNDVDIGSHDINEEIRAYLSPNEIKIPSDEDIRLDIFYSEIQLSTEENPISDNDPIEPSSPSFDLIKSMKRCFTHDSSNRLTPPISSEEDNKENEPPIESDFRNNNNKGSIPCTPVRLNTRNKMVVNAVKPENYESNFFRHLKEKTSVSRFCVQQILLRIYSRIVSTESRKLRSYKAFTAEVYGELLPSFTSEVLTKVNLQPQHKFYDLGSGVGNTTFQAALEFGVHLSGGCEIMEHASKLTELQTMLLNKHLALLGLKKLPLNFALSQSFVENDIVRQAVIECDVLLVNNYLFDVNLNTAVGKMLYGLKPGTKIISLRNFIRPRYKASSDKTIFDYLKVERHEMSNYLSVSWTANKVPYYISTVQENICEEYV.

Disordered stretches follow at residues 47–68, 473–497, and 873–911; these read MDTG…SDSS, NMIS…KPTS, and HDSS…SIPC. Residues 55 to 68 are compositionally biased toward low complexity; it reads DSNSDSSDPRSDSS. Residues 473–487 show a composition bias toward basic and acidic residues; sequence NMISDHKLKGKNNEQ. One can recognise a DOT1 domain in the interval 846–1172; that stretch reads NPISDNDPIE…VQENICEEYV (327 aa). A compositionally biased stretch (acidic residues) spans 885–896; the sequence is SEEDNKENEPPI. Residues 981–984, 1004–1013, Glu1031, and 1068–1069 contribute to the S-adenosyl-L-methionine site; these read YGEL, FYDLGSGVGN, and SF.

This sequence belongs to the class I-like SAM-binding methyltransferase superfamily. DOT1 family.

The protein resides in the nucleus. It catalyses the reaction L-lysyl(79)-[histone H3] + 3 S-adenosyl-L-methionine = N(6),N(6),N(6)-trimethyl-L-lysyl(79)-[histone H3] + 3 S-adenosyl-L-homocysteine + 3 H(+). Ubiquitination of histone H2B to form H2BK123ub1 is required for efficient DOT1 methyltransferase activity on histone H3. In terms of biological role, histone methyltransferase that specifically trimethylates histone H3 to form H3K79me3. This methylation is required for telomere silencing and for the pachytene checkpoint during the meiotic cell cycle by allowing the recruitment of RAD9 to double strand breaks. Nucleosomes are preferred as substrate compared to free histone. In Debaryomyces hansenii (strain ATCC 36239 / CBS 767 / BCRC 21394 / JCM 1990 / NBRC 0083 / IGC 2968) (Yeast), this protein is Histone-lysine N-methyltransferase, H3 lysine-79 specific (DOT1).